Reading from the N-terminus, the 249-residue chain is MRVTFPDAKALKKIVPIVADLISEGQFVATEEGIKLVAMDPASIAMVIWEMKPEAFIDYTIEGDKEIITVSMDDLKTIVKKLKQREMVVWETDREKNKLKILARGTIKKTFSIPLLEGEETETPIPSLEYNNVVELDSKAIKEIIDDASAIADSLKFKAEPPSKLIIKAEGEMKEMTVELTEGEDAVVSIDIQEEAYASYSIDYLKKFAKAADVSDIAILKLKTDYPLWLEYRYLDKMTLIFILAPRSD.

The protein belongs to the PCNA family. Homotrimer. The subunits circularize to form a toroid; DNA passes through its center. Replication factor C (RFC) is required to load the toroid on the DNA.

Its function is as follows. Sliding clamp subunit that acts as a moving platform for DNA processing. Responsible for tethering the catalytic subunit of DNA polymerase and other proteins to DNA during high-speed replication. The sequence is that of DNA polymerase sliding clamp from Nanoarchaeum equitans (strain Kin4-M).